We begin with the raw amino-acid sequence, 661 residues long: Putative lipase ATG15 (661 aa).

The Cytoplasmic portion of the chain corresponds to 1-3 (MIW). Residues 4-24 (NGRLVLACVLLIAGCSGQVDA) traverse the membrane as a helical; Signal-anchor for type II membrane protein segment. Topologically, residues 25–661 (ARTREQRKAF…FDDFDPKNDL (637 aa)) are lumenal. N-linked (GlcNAc...) asparagine glycosylation is found at Asn155, Asn190, Asn212, Asn271, and Asn295. The active-site Charge relay system is Ser311. N-linked (GlcNAc...) asparagine glycosylation is present at Asn457. 2 disordered regions span residues 492-559 (ESTT…TSTS) and 574-597 (TTTS…TTTS). Low complexity-rich tracts occupy residues 493–513 (STTS…STRT), 527–559 (TTTS…TSTS), and 574–595 (TTTS…TKTT).

It belongs to the AB hydrolase superfamily. Lipase family. In terms of assembly, binds to both phosphatidylinositol (PI) and phosphatidylinositol 3,5-bisphosphate (PIP2).

The protein localises to the endosome. It localises to the multivesicular body membrane. The protein resides in the prevacuolar compartment membrane. It catalyses the reaction a triacylglycerol + H2O = a diacylglycerol + a fatty acid + H(+). Its function is as follows. Lipase which is essential for lysis of subvacuolar cytoplasm to vacuole targeted bodies and intravacuolar autophagic bodies. Involved in the lysis of intravacuolar multivesicular body (MVB) vesicles. The intravacuolar membrane disintegration by ATG15 is critical to life span extension. The protein is Putative lipase ATG15 (ATG15) of Passalora fulva (Tomato leaf mold).